A 180-amino-acid chain; its full sequence is uncharacterized protein (180 aa).

Positions 17–80 constitute an HTH dtxR-type domain; the sequence is RRSRILHYLM…LIPNMGVRLT (64 aa).

The protein belongs to the DtxR/MntR family.

This is an uncharacterized protein from Aeropyrum pernix (strain ATCC 700893 / DSM 11879 / JCM 9820 / NBRC 100138 / K1).